Reading from the N-terminus, the 289-residue chain is Carbonyl reductase [NADPH] 1 (289 aa).

Position 2 is an N-acetylserine (Ser-2). Ser-2 carries the phosphoserine modification. Residues 10-34, 63-64, and Asn-90 each bind NADP(+); these read VTGANKGIGFAIVRDLCRQFAGDVV and DI. Residues 95–97 and Gln-106 each bind glutathione; that span reads FQL. Ser-140 is a substrate binding site. 193-194 serves as a coordination point for glutathione; sequence TY. The active-site Proton acceptor is Tyr-194. NADP(+) contacts are provided by residues 194 to 198 and 231 to 233; these read YGVTK and VRT. The residue at position 239 (Lys-239) is an N6-1-carboxyethyl lysine.

The protein belongs to the short-chain dehydrogenases/reductases (SDR) family. In terms of assembly, monomer. As to expression, expressed in kidney (at protein level).

The protein resides in the cytoplasm. It carries out the reaction a secondary alcohol + NADP(+) = a ketone + NADPH + H(+). The catalysed reaction is prostaglandin E1 + NADP(+) = 15-oxoprostaglandin E1 + NADPH + H(+). The enzyme catalyses prostaglandin F2alpha + NADP(+) = prostaglandin E2 + NADPH + H(+). It catalyses the reaction prostaglandin D2 + NADP(+) = 15-oxoprostaglandin D2 + NADPH + H(+). It carries out the reaction prostaglandin E2 + NADP(+) = 15-oxoprostaglandin E2 + NADPH + H(+). The catalysed reaction is prostaglandin F2alpha + NADP(+) = 15-oxoprostaglandin F2alpha + NADPH + H(+). The enzyme catalyses menadione + NADPH + H(+) = menadiol + NADP(+). It catalyses the reaction daunorubicin + NADPH + H(+) = 13-dihydrodaunorubicin + NADP(+). It carries out the reaction S-nitrosoglutathione + NADPH + H(+) = S-(hydroxysulfenamide)glutathione + NADP(+). The catalysed reaction is a primary alcohol + NADP(+) = an aldehyde + NADPH + H(+). The enzyme catalyses cortisol + NADPH + H(+) = 20beta-dihydrocortisol + NADP(+). It catalyses the reaction corticosterone + NADPH + H(+) = 20beta-dihydrocorticosterone + NADP(+). NADPH-dependent reductase with broad substrate specificity. Catalyzes the reduction of a wide variety of carbonyl compounds including quinones, prostaglandins, menadione, plus various xenobiotics. Catalyzes the reduction of the antitumor anthracyclines doxorubicin and daunorubicin to the cardiotoxic compounds doxorubicinol and daunorubicinol. Can convert prostaglandin E2 to prostaglandin F2-alpha. Can bind glutathione, which explains its higher affinity for glutathione-conjugated substrates. Catalyzes the reduction of S-nitrosoglutathione. In addition, participates in the glucocorticoid metabolism by catalyzing the NADPH-dependent cortisol/corticosterone into 20beta-dihydrocortisol (20b-DHF) or 20beta-corticosterone (20b-DHB), which are weak agonists of NR3C1 and NR3C2 in adipose tissue. This chain is Carbonyl reductase [NADPH] 1, found in Sus scrofa (Pig).